We begin with the raw amino-acid sequence, 339 residues long: Uroporphyrinogen decarboxylase (339 aa).

Residues 21–25 (RQAGR), aspartate 71, tyrosine 147, serine 202, and histidine 315 each bind substrate.

The protein belongs to the uroporphyrinogen decarboxylase family. As to quaternary structure, homodimer.

It localises to the cytoplasm. It carries out the reaction uroporphyrinogen III + 4 H(+) = coproporphyrinogen III + 4 CO2. It participates in porphyrin-containing compound metabolism; protoporphyrin-IX biosynthesis; coproporphyrinogen-III from 5-aminolevulinate: step 4/4. Catalyzes the decarboxylation of four acetate groups of uroporphyrinogen-III to yield coproporphyrinogen-III. This is Uroporphyrinogen decarboxylase from Helicobacter pylori (strain G27).